We begin with the raw amino-acid sequence, 252 residues long: Aspartate/glutamate leucyltransferase (252 aa).

It belongs to the R-transferase family. Bpt subfamily.

The protein localises to the cytoplasm. The enzyme catalyses N-terminal L-glutamyl-[protein] + L-leucyl-tRNA(Leu) = N-terminal L-leucyl-L-glutamyl-[protein] + tRNA(Leu) + H(+). It catalyses the reaction N-terminal L-aspartyl-[protein] + L-leucyl-tRNA(Leu) = N-terminal L-leucyl-L-aspartyl-[protein] + tRNA(Leu) + H(+). Functions in the N-end rule pathway of protein degradation where it conjugates Leu from its aminoacyl-tRNA to the N-termini of proteins containing an N-terminal aspartate or glutamate. This is Aspartate/glutamate leucyltransferase from Hyphomonas neptunium (strain ATCC 15444).